A 584-amino-acid polypeptide reads, in one-letter code: N(6)-adenosine-methyltransferase subunit METTL3 (584 aa).

2 disordered regions span residues 1–65 and 162–221; these read MSDT…EHPP and KADD…SNKV. Positions 187–204 are enriched in polar residues; sequence RKSSVSLATASISQLTAS. Positions 213–220 match the Nuclear localization signal motif; that stretch reads DKKGRSNK. S-adenosyl-L-methionine contacts are provided by residues 381 to 382 and Asp-399; that span reads DI. The gate loop 1 stretch occupies residues 400-414; it reads PPWDIHMELPYGTLT. 2 interaction with METTL14 regions span residues 454–458 and 468–484; these read DRVDE and QRII…NHGK. An interphase loop region spans residues 466 to 483; it reads QLQRIIRTGRTGHWLNHG. The tract at residues 469–482 is positively charged region required for RNA-binding; it reads RIIRTGRTGHWLNH. The segment at 511 to 519 is gate loop 2; sequence VRSTSHKPD. S-adenosyl-L-methionine is bound by residues Lys-517, 540 to 543, and 553 to 554; these read RPHN and NQ.

The protein belongs to the MT-A70-like family. In terms of assembly, heterodimer; heterodimerizes with mettl14 to form an antiparallel heterodimer that constitutes an active methyltransferase. Component of the WMM complex, a N6-methyltransferase complex composed of a catalytic subcomplex, named MAC, and of an associated subcomplex, named MACOM. The MAC subcomplex is composed of mettl3 and mettl14. In terms of tissue distribution, expressed in the hemato-vascular system: enriched in sorted endothelial cells and haemogenic endothelium.

Its subcellular location is the nucleus. The protein localises to the nucleus speckle. It localises to the cytoplasm. It carries out the reaction an adenosine in mRNA + S-adenosyl-L-methionine = an N(6)-methyladenosine in mRNA + S-adenosyl-L-homocysteine + H(+). The METTL3-METTL14 heterodimer forms a N6-methyltransferase complex that methylates adenosine residues at the N(6) position of some RNAs and regulates various processes such as the circadian clock, differentiation of embryonic and hematopoietic stem cells, cortical neurogenesis, response to DNA damage, differentiation of T-cells and primary miRNA processing. In the heterodimer formed with mettl14, mettl3 constitutes the catalytic core. N6-methyladenosine (m6A), which takes place at the 5'-[AG]GAC-3' consensus sites of some mRNAs, plays a role in mRNA stability, processing and translation efficiency. M6A is also involved in hematopoietic stem cells specification: m6A methylation and subsequent destabilization of mRNAs, such as notch1a, leads to decreased Notch signaling, promoting endothelial to hematopoietic transition. M6A also takes place in other RNA molecules, such as primary miRNA (pri-miRNAs). Mediates methylation of pri-miRNAs. The chain is N(6)-adenosine-methyltransferase subunit METTL3 from Danio rerio (Zebrafish).